The following is a 311-amino-acid chain: Aspartate carbamoyltransferase catalytic subunit (311 aa).

Carbamoyl phosphate contacts are provided by Arg-55 and Thr-56. Position 85 (Lys-85) interacts with L-aspartate. Residues Arg-106, His-135, and Gln-138 each coordinate carbamoyl phosphate. L-aspartate is bound by residues Arg-168 and Arg-230. Residues Leu-268 and Pro-269 each contribute to the carbamoyl phosphate site.

This sequence belongs to the aspartate/ornithine carbamoyltransferase superfamily. ATCase family. As to quaternary structure, heterododecamer (2C3:3R2) of six catalytic PyrB chains organized as two trimers (C3), and six regulatory PyrI chains organized as three dimers (R2).

It carries out the reaction carbamoyl phosphate + L-aspartate = N-carbamoyl-L-aspartate + phosphate + H(+). It participates in pyrimidine metabolism; UMP biosynthesis via de novo pathway; (S)-dihydroorotate from bicarbonate: step 2/3. In terms of biological role, catalyzes the condensation of carbamoyl phosphate and aspartate to form carbamoyl aspartate and inorganic phosphate, the committed step in the de novo pyrimidine nucleotide biosynthesis pathway. This chain is Aspartate carbamoyltransferase catalytic subunit, found in Baumannia cicadellinicola subsp. Homalodisca coagulata.